The following is a 370-amino-acid chain: Phosphoserine aminotransferase (370 aa).

Arginine 42 contacts L-glutamate. Residues tryptophan 108, threonine 158, aspartate 182, and glutamine 205 each contribute to the pyridoxal 5'-phosphate site. An N6-(pyridoxal phosphate)lysine modification is found at lysine 206. 247-248 (NT) lines the pyridoxal 5'-phosphate pocket.

It belongs to the class-V pyridoxal-phosphate-dependent aminotransferase family. SerC subfamily. In terms of assembly, homodimer. It depends on pyridoxal 5'-phosphate as a cofactor.

The protein localises to the cytoplasm. The catalysed reaction is O-phospho-L-serine + 2-oxoglutarate = 3-phosphooxypyruvate + L-glutamate. It catalyses the reaction 4-(phosphooxy)-L-threonine + 2-oxoglutarate = (R)-3-hydroxy-2-oxo-4-phosphooxybutanoate + L-glutamate. Its pathway is amino-acid biosynthesis; L-serine biosynthesis; L-serine from 3-phospho-D-glycerate: step 2/3. It functions in the pathway cofactor biosynthesis; pyridoxine 5'-phosphate biosynthesis; pyridoxine 5'-phosphate from D-erythrose 4-phosphate: step 3/5. Functionally, catalyzes the reversible conversion of 3-phosphohydroxypyruvate to phosphoserine and of 3-hydroxy-2-oxo-4-phosphonooxybutanoate to phosphohydroxythreonine. This Albidiferax ferrireducens (strain ATCC BAA-621 / DSM 15236 / T118) (Rhodoferax ferrireducens) protein is Phosphoserine aminotransferase.